The chain runs to 131 residues: MCEGYVEKPLYLLIAEWMMAENRWVIAREISIHFDIEHSKAVNTLTYILSEVTEISCEVKMIPNKLEGRGCQCQRLVKVVDIDEQIYARLRNNSREKLVGVRKTPRIPAVPLTELNREQKWQMMLSKSMRR.

In terms of biological role, potential transcriptional activator of carnitine metabolism. The sequence is that of Transcriptional activatory protein CaiF (caiF) from Escherichia coli (strain K12).